The chain runs to 949 residues: Glycine dehydrogenase (decarboxylating) (949 aa).

Lys700 is modified (N6-(pyridoxal phosphate)lysine).

This sequence belongs to the GcvP family. As to quaternary structure, the glycine cleavage system is composed of four proteins: P, T, L and H. It depends on pyridoxal 5'-phosphate as a cofactor.

The enzyme catalyses N(6)-[(R)-lipoyl]-L-lysyl-[glycine-cleavage complex H protein] + glycine + H(+) = N(6)-[(R)-S(8)-aminomethyldihydrolipoyl]-L-lysyl-[glycine-cleavage complex H protein] + CO2. Its function is as follows. The glycine cleavage system catalyzes the degradation of glycine. The P protein binds the alpha-amino group of glycine through its pyridoxal phosphate cofactor; CO(2) is released and the remaining methylamine moiety is then transferred to the lipoamide cofactor of the H protein. In Christiangramia forsetii (strain DSM 17595 / CGMCC 1.15422 / KT0803) (Gramella forsetii), this protein is Glycine dehydrogenase (decarboxylating).